The primary structure comprises 901 residues: HTH-type transcriptional regulator MalT (901 aa).

39–46 contributes to the ATP binding site; sequence SPAGYGKT. Residues 829-894 form the HTH luxR-type domain; sequence ELIRTSPLTQ…AAVQHAQKLL (66 aa). A DNA-binding region (H-T-H motif) is located at residues 853 to 872; that stretch reads NEQIAGELEVAATTIKTHIR.

It belongs to the MalT family. In terms of assembly, monomer in solution. Oligomerizes to an active state in the presence of the positive effectors ATP and maltotriose.

Its activity is regulated as follows. Activated by ATP and maltotriose, which are both required for DNA binding. In terms of biological role, positively regulates the transcription of the maltose regulon whose gene products are responsible for uptake and catabolism of malto-oligosaccharides. Specifically binds to the promoter region of its target genes, recognizing a short DNA motif called the MalT box. The protein is HTH-type transcriptional regulator MalT of Shigella flexneri serotype 5b (strain 8401).